The chain runs to 343 residues: SUMO-activating enzyme subunit aos-1 (343 aa).

It belongs to the ubiquitin-activating E1 family. In terms of assembly, heterodimer of aos-1 and uba-2.

Its pathway is protein modification; protein sumoylation. Its function is as follows. The dimeric enzyme acts as an E1 ligase for smo-1. It mediates ATP-dependent activation of smo-1 and formation of a thioester with a conserved cysteine residue on uba-2. This Caenorhabditis elegans protein is SUMO-activating enzyme subunit aos-1 (aos-1).